Reading from the N-terminus, the 833-residue chain is Mannosyl-oligosaccharide glucosidase (833 aa).

At 1-10 (MLISKSKMFK) the chain is on the cytoplasmic side. The chain crosses the membrane as a helical; Signal-anchor for type II membrane protein span at residues 11–28 (TFWILTSIVLLASATVDI). The Lumenal portion of the chain corresponds to 29–833 (SKLQEFEEYQ…ALVVNILGRF (805 aa)). The substrate site is built by N42 and N122. N-linked (GlcNAc...) asparagine glycans are attached at residues N42, N122, and N135. Residue E143 coordinates substrate. Catalysis depends on D601, which acts as the Proton donor. Cysteines 669 and 685 form a disulfide. The N-linked (GlcNAc...) asparagine glycan is linked to N787. E804 acts as the Proton acceptor in catalysis.

Belongs to the glycosyl hydrolase 63 family. N-glycosylated.

The protein localises to the endoplasmic reticulum membrane. The catalysed reaction is N(4)-(alpha-D-Glc-(1-&gt;2)-alpha-D-Glc-(1-&gt;3)-alpha-D-Glc-(1-&gt;3)-alpha-D-Man-(1-&gt;2)-alpha-D-Man-(1-&gt;2)-alpha-D-Man-(1-&gt;3)-[alpha-D-Man-(1-&gt;2)-alpha-D-Man-(1-&gt;3)-[alpha-D-Man-(1-&gt;2)-alpha-D-Man-(1-&gt;6)]-alpha-D-Man-(1-&gt;6)]-beta-D-Man-(1-&gt;4)-beta-D-GlcNAc-(1-&gt;4)-beta-D-GlcNAc)-L-asparaginyl-[protein] + H2O = N(4)-(alpha-D-Glc-(1-&gt;3)-alpha-D-Glc-(1-&gt;3)-alpha-D-Man-(1-&gt;2)-alpha-D-Man-(1-&gt;2)-alpha-D-Man-(1-&gt;3)-[alpha-D-Man-(1-&gt;2)-alpha-D-Man-(1-&gt;3)-[alpha-D-Man-(1-&gt;2)-alpha-D-Man-(1-&gt;6)]-alpha-D-Man-(1-&gt;6)]-beta-D-Man-(1-&gt;4)-beta-D-GlcNAc-(1-&gt;4)-beta-D-GlcNAc)-L-asparaginyl-[protein] + beta-D-glucose. Its pathway is glycan metabolism; N-glycan degradation. With respect to regulation, miglitol is an effective inhibitor at 1 mM. Its function is as follows. Cleaves the distal alpha 1,2-linked glucose residue from the Glc(3)Man(9)GlcNAc(2) oligosaccharide precursor highly specifically. Seems to play a role in beta-1,6-glucan synthesis. This Saccharomyces cerevisiae (strain ATCC 204508 / S288c) (Baker's yeast) protein is Mannosyl-oligosaccharide glucosidase (CWH41).